A 188-amino-acid chain; its full sequence is Preprocaerulein type-1 (188 aa).

The signal sequence occupies residues 1–26 (MFKGILLCVLFAVLSANPLSQPEGFA). Positions 27 to 170 (DEERDVRGLA…ANDERRFADG (144 aa)) are excised as a propeptide. Residues 152–188 (LGGSPQQREANDERRFADGQQDYTGWMDFGRRNGEDD) are disordered. Tyr-174 bears the Sulfotyrosine mark. Phe-180 carries the post-translational modification Phenylalanine amide. Residues 184–188 (NGEDD) constitute a propeptide that is removed on maturation.

This sequence belongs to the gastrin/cholecystokinin family. Expressed by the skin glands.

It localises to the secreted. The pharmacological activities of caerulein are quite similar to the physiological activities of gastrin and related peptides. The sequence is that of Preprocaerulein type-1 from Xenopus laevis (African clawed frog).